The primary structure comprises 521 residues: Glucose-1-phosphate adenylyltransferase large subunit 3, chloroplastic (521 aa).

The N-terminal 61 residues, 1-61, are a transit peptide targeting the chloroplast; it reads MDSCCNFSLG…RKLRPGVAYA (61 aa).

The protein belongs to the bacterial/plant glucose-1-phosphate adenylyltransferase family. In terms of assembly, heterotetramer. In terms of tissue distribution, probably are expressed in roots, flowers and/or seeds.

The protein localises to the plastid. The protein resides in the chloroplast. The catalysed reaction is alpha-D-glucose 1-phosphate + ATP + H(+) = ADP-alpha-D-glucose + diphosphate. It functions in the pathway glycan biosynthesis; starch biosynthesis. Activated by 3'phosphoglycerate, inhibited by orthophosphate. Allosteric regulation. Functionally, this protein plays a role in synthesis of starch. It catalyzes the synthesis of the activated glycosyl donor, ADP-glucose from Glc-1-P and ATP. The sequence is that of Glucose-1-phosphate adenylyltransferase large subunit 3, chloroplastic (APL3) from Arabidopsis thaliana (Mouse-ear cress).